Consider the following 206-residue polypeptide: Mediator of RNA polymerase II transcription subunit 19 (206 aa).

The interval 171-206 is disordered; sequence GTGTKTKKRKYKSNGSSMASPNTELQPDDMKRRRLE. The span at 183 to 195 shows a compositional bias: polar residues; sequence SNGSSMASPNTEL.

It belongs to the Mediator complex subunit 19 family. In terms of assembly, component of the Mediator complex.

Its subcellular location is the nucleus. Functionally, component of the Mediator complex, a coactivator involved in the regulated transcription of nearly all RNA polymerase II-dependent genes. Mediator functions as a bridge to convey information from gene-specific regulatory proteins to the basal RNA polymerase II transcription machinery. Mediator is recruited to promoters by direct interactions with regulatory proteins and serves as a scaffold for the assembly of a functional preinitiation complex with RNA polymerase II and the general transcription factors. The protein is Mediator of RNA polymerase II transcription subunit 19 (ROX3) of Kluyveromyces lactis (strain ATCC 8585 / CBS 2359 / DSM 70799 / NBRC 1267 / NRRL Y-1140 / WM37) (Yeast).